The sequence spans 123 residues: Ribosome-binding factor A (123 aa).

This sequence belongs to the RbfA family. As to quaternary structure, monomer. Binds 30S ribosomal subunits, but not 50S ribosomal subunits or 70S ribosomes.

It localises to the cytoplasm. One of several proteins that assist in the late maturation steps of the functional core of the 30S ribosomal subunit. Associates with free 30S ribosomal subunits (but not with 30S subunits that are part of 70S ribosomes or polysomes). Required for efficient processing of 16S rRNA. May interact with the 5'-terminal helix region of 16S rRNA. The sequence is that of Ribosome-binding factor A from Neisseria meningitidis serogroup B (strain ATCC BAA-335 / MC58).